A 1114-amino-acid polypeptide reads, in one-letter code: WD repeat-containing protein 72 (1114 aa).

7 WD repeats span residues 15-54 (APPH…KISA), 60-102 (GHSA…CVEK), 160-197 (KCMC…NSIQ), 327-373 (EENK…SKFD), 413-452 (GMTA…KAGL), 470-515 (GHHQ…ILHT), and 566-605 (KHLF…LERH). Disordered regions lie at residues 634–658 (SETH…VPCP) and 749–798 (SLQT…PPRK). Residues 780–796 (KRQKKMKSSKKAHPKPP) are compositionally biased toward basic residues. Phosphoserine is present on residues Ser-1093 and Ser-1095.

In terms of tissue distribution, expressed in maturation stage ameloblasts (at protein level).

Its subcellular location is the cytoplasmic vesicle. Functionally, plays a major role in formation of tooth enamel. Specifically required during the maturation phase of amelogenesis for normal formation of the enamel matrix and clearance of enamel proteins. May be involved in localization of the calcium transporter SLC24A4 to the ameloblast cell membrane. The chain is WD repeat-containing protein 72 from Mus musculus (Mouse).